The primary structure comprises 159 residues: Succinate dehydrogenase [ubiquinone] cytochrome b small subunit, mitochondrial (159 aa).

The N-terminal 56 residues, 1-56 (MAVLWRLSAVCGALGGRALLLRTPVVRPAHISAFLQDRPIPEWCGVQHIHLSPSHH), are a transit peptide targeting the mitochondrion. The Mitochondrial matrix portion of the chain corresponds to 57 to 63 (SGSKAAS). The helical transmembrane segment at 64 to 85 (LHWTSERVVSVLLLGLLPAAYL) threads the bilayer. Residues 86–90 (NPCSA) are Mitochondrial intermembrane-facing. A helical membrane pass occupies residues 91–111 (MDYSLAAALTLHGHWGLGQVV). His-102 contributes to the heme b binding site. The Mitochondrial matrix portion of the chain corresponds to 112-122 (TDYVHGDALQK). Tyr-114 lines the a ubiquinone pocket. Residues 123–144 (AAKAGLLALSALTFAGLCYFNY) traverse the membrane as a helical segment. Over 145–159 (HDVGICKAVAMLWKL) the chain is Mitochondrial intermembrane.

Belongs to the CybS family. In terms of assembly, component of complex II composed of four subunits: the flavoprotein (FP) SDHA, iron-sulfur protein (IP) SDHB, and a cytochrome b560 composed of SDHC and SDHD.

The protein resides in the mitochondrion inner membrane. It participates in carbohydrate metabolism; tricarboxylic acid cycle. Membrane-anchoring subunit of succinate dehydrogenase (SDH) that is involved in complex II of the mitochondrial electron transport chain and is responsible for transferring electrons from succinate to ubiquinone (coenzyme Q). SDH also oxidizes malate to the non-canonical enol form of oxaloacetate, enol-oxaloacetate. Enol-oxaloacetate, which is a potent inhibitor of the succinate dehydrogenase activity, is further isomerized into keto-oxaloacetate. The protein is Succinate dehydrogenase [ubiquinone] cytochrome b small subunit, mitochondrial (SDHD) of Homo sapiens (Human).